The primary structure comprises 288 residues: Diaminopimelate epimerase (288 aa).

N14 and N67 together coordinate substrate. C76 (proton donor) is an active-site residue. Substrate is bound by residues 77–78, N166, N199, and 217–218; these read GN and ER. C226 serves as the catalytic Proton acceptor. 227-228 is a substrate binding site; sequence GT.

This sequence belongs to the diaminopimelate epimerase family. In terms of assembly, homodimer.

Its subcellular location is the cytoplasm. It catalyses the reaction (2S,6S)-2,6-diaminopimelate = meso-2,6-diaminopimelate. The protein operates within amino-acid biosynthesis; L-lysine biosynthesis via DAP pathway; DL-2,6-diaminopimelate from LL-2,6-diaminopimelate: step 1/1. Functionally, catalyzes the stereoinversion of LL-2,6-diaminopimelate (L,L-DAP) to meso-diaminopimelate (meso-DAP), a precursor of L-lysine and an essential component of the bacterial peptidoglycan. This Bacillus cereus (strain 03BB102) protein is Diaminopimelate epimerase.